A 55-amino-acid chain; its full sequence is ATP synthase small subunit 6-A, mitochondrial (55 aa).

A mitochondrion-targeting transit peptide spans 1 to 11 (MRLFDPWPVFF). A helical membrane pass occupies residues 21–39 (FLTGFAVTGVLITKLTAGL).

Belongs to the ATPase 6 subunit family.

It is found in the mitochondrion inner membrane. Mitochondrial membrane ATP synthase (F(1)F(0) ATP synthase or Complex V) produces ATP from ADP in the presence of a proton gradient across the membrane which is generated by electron transport complexes of the respiratory chain. F-type ATPases consist of two structural domains, F(1) - containing the extramembraneous catalytic core and F(0) - containing the membrane proton channel, linked together by a central stalk and a peripheral stalk. During catalysis, ATP synthesis in the catalytic domain of F(1) is coupled via a rotary mechanism of the central stalk subunits to proton translocation. Part of the complex F(0) domain. Confers tolerance to several abiotic stresses (e.g. salt, mannitol, drought, oxidative and cold stresses), probably by providing additional energy needed for cell homeostasis. The sequence is that of ATP synthase small subunit 6-A, mitochondrial from Arabidopsis thaliana (Mouse-ear cress).